We begin with the raw amino-acid sequence, 450 residues long: 3-phosphoshikimate 1-carboxyvinyltransferase (450 aa).

Residues 1–23 (MSSHGAPIPMTSSACGPLTGEAR) are disordered. 3-phosphoshikimate contacts are provided by Lys-28, Ser-29, and Arg-33. Lys-28 is a phosphoenolpyruvate binding site. Residues Gly-101 and Arg-129 each contribute to the phosphoenolpyruvate site. 3-phosphoshikimate-binding residues include Ser-174, Gln-176, Asp-327, and Lys-354. Residue Gln-176 coordinates phosphoenolpyruvate. Asp-327 functions as the Proton acceptor in the catalytic mechanism. Residues Arg-358 and Arg-403 each coordinate phosphoenolpyruvate.

The protein belongs to the EPSP synthase family. As to quaternary structure, monomer.

Its subcellular location is the cytoplasm. The enzyme catalyses 3-phosphoshikimate + phosphoenolpyruvate = 5-O-(1-carboxyvinyl)-3-phosphoshikimate + phosphate. It participates in metabolic intermediate biosynthesis; chorismate biosynthesis; chorismate from D-erythrose 4-phosphate and phosphoenolpyruvate: step 6/7. Its function is as follows. Catalyzes the transfer of the enolpyruvyl moiety of phosphoenolpyruvate (PEP) to the 5-hydroxyl of shikimate-3-phosphate (S3P) to produce enolpyruvyl shikimate-3-phosphate and inorganic phosphate. The sequence is that of 3-phosphoshikimate 1-carboxyvinyltransferase from Roseobacter denitrificans (strain ATCC 33942 / OCh 114) (Erythrobacter sp. (strain OCh 114)).